We begin with the raw amino-acid sequence, 1058 residues long: Carbamoyl phosphate synthase pyrimidine-specific large chain (1058 aa).

Residues 1-401 form a carboxyphosphate synthetic domain region; the sequence is MPKRTDIHKI…ATLKAVRSLE (401 aa). ATP is bound by residues Arg-129, Arg-169, Gly-175, Gly-176, Gln-208, Ile-210, Glu-215, Gly-241, Ile-242, His-243, Gln-284, and Glu-298. One can recognise an ATP-grasp 1 domain in the interval 133 to 327; the sequence is KALMEELGEP…IAKMAAKIAV (195 aa). Positions 284, 298, and 300 each coordinate Mg(2+). Positions 284, 298, and 300 each coordinate Mn(2+). An oligomerization domain region spans residues 402–546; the sequence is IGVHHVEEPA…YGTYEFENES (145 aa). The tract at residues 547–929 is carbamoyl phosphate synthetic domain; sequence IVTKRPSVLV…ALYKAFEAAK (383 aa). An ATP-grasp 2 domain is found at 671–861; that stretch reads DKVIKALAIP…MAQVATRAIL (191 aa). 10 residues coordinate ATP: Arg-707, Ser-746, Leu-748, Glu-752, Gly-777, Val-778, His-779, Ser-780, Gln-820, and Glu-832. Mg(2+) contacts are provided by Gln-820, Glu-832, and Asn-834. Mn(2+) contacts are provided by Gln-820, Glu-832, and Asn-834. In terms of domain architecture, MGS-like spans 930-1058; the sequence is LHVPSHGNVL…ESQSFVTQAL (129 aa). Positions 930–1058 are allosteric domain; that stretch reads LHVPSHGNVL…ESQSFVTQAL (129 aa).

It belongs to the CarB family. Composed of two chains; the small (or glutamine) chain promotes the hydrolysis of glutamine to ammonia, which is used by the large (or ammonia) chain to synthesize carbamoyl phosphate. Tetramer of heterodimers (alpha,beta)4. The cofactor is Mg(2+). Requires Mn(2+) as cofactor.

It carries out the reaction hydrogencarbonate + L-glutamine + 2 ATP + H2O = carbamoyl phosphate + L-glutamate + 2 ADP + phosphate + 2 H(+). The catalysed reaction is hydrogencarbonate + NH4(+) + 2 ATP = carbamoyl phosphate + 2 ADP + phosphate + 2 H(+). It participates in amino-acid biosynthesis; L-arginine biosynthesis; carbamoyl phosphate from bicarbonate: step 1/1. Its pathway is pyrimidine metabolism; UMP biosynthesis via de novo pathway; (S)-dihydroorotate from bicarbonate: step 1/3. Small subunit of the glutamine-dependent carbamoyl phosphate synthetase (CPSase). CPSase catalyzes the formation of carbamoyl phosphate from the ammonia moiety of glutamine, carbonate, and phosphate donated by ATP, constituting the first step of the biosynthetic pathway leading to pyrimidine nucleotides. The large subunit (synthetase) binds the substrates ammonia (free or transferred from glutamine from the small subunit), hydrogencarbonate and ATP and carries out an ATP-coupled ligase reaction, activating hydrogencarbonate by forming carboxy phosphate which reacts with ammonia to form carbamoyl phosphate. This is Carbamoyl phosphate synthase pyrimidine-specific large chain (pyrAB) from Lactiplantibacillus plantarum (strain ATCC BAA-793 / NCIMB 8826 / WCFS1) (Lactobacillus plantarum).